Reading from the N-terminus, the 218-residue chain is Large ribosomal subunit protein uL3 (218 aa).

The disordered stretch occupies residues Arg133–Gly158.

It belongs to the universal ribosomal protein uL3 family. In terms of assembly, part of the 50S ribosomal subunit. Forms a cluster with proteins L14 and L19.

Its function is as follows. One of the primary rRNA binding proteins, it binds directly near the 3'-end of the 23S rRNA, where it nucleates assembly of the 50S subunit. The chain is Large ribosomal subunit protein uL3 from Mycolicibacterium vanbaalenii (strain DSM 7251 / JCM 13017 / BCRC 16820 / KCTC 9966 / NRRL B-24157 / PYR-1) (Mycobacterium vanbaalenii).